Reading from the N-terminus, the 316-residue chain is Acetyl-coenzyme A carboxylase carboxyl transferase subunit alpha (316 aa).

The CoA carboxyltransferase C-terminal domain maps to 40-290 (KARKELQRIY…RERFAHHLQE (251 aa)).

The protein belongs to the AccA family. In terms of assembly, acetyl-CoA carboxylase is a heterohexamer composed of biotin carboxyl carrier protein (AccB), biotin carboxylase (AccC) and two subunits each of ACCase subunit alpha (AccA) and ACCase subunit beta (AccD).

Its subcellular location is the cytoplasm. The enzyme catalyses N(6)-carboxybiotinyl-L-lysyl-[protein] + acetyl-CoA = N(6)-biotinyl-L-lysyl-[protein] + malonyl-CoA. It participates in lipid metabolism; malonyl-CoA biosynthesis; malonyl-CoA from acetyl-CoA: step 1/1. Its function is as follows. Component of the acetyl coenzyme A carboxylase (ACC) complex. First, biotin carboxylase catalyzes the carboxylation of biotin on its carrier protein (BCCP) and then the CO(2) group is transferred by the carboxyltransferase to acetyl-CoA to form malonyl-CoA. This Acidithiobacillus ferrooxidans (strain ATCC 23270 / DSM 14882 / CIP 104768 / NCIMB 8455) (Ferrobacillus ferrooxidans (strain ATCC 23270)) protein is Acetyl-coenzyme A carboxylase carboxyl transferase subunit alpha.